The primary structure comprises 192 residues: UPF0312 protein YPK_1931 (192 aa).

A signal peptide spans 1-23 (MINKTLLGLSLGALMFTAGSAVA).

Belongs to the UPF0312 family. Type 1 subfamily.

Its subcellular location is the periplasm. This is UPF0312 protein YPK_1931 from Yersinia pseudotuberculosis serotype O:3 (strain YPIII).